Here is a 286-residue protein sequence, read N- to C-terminus: Energy-coupling factor transporter ATP-binding protein EcfA2 (286 aa).

The ABC transporter domain maps to isoleucine 3–serine 244. ATP is bound at residue glycine 40 to serine 47.

This sequence belongs to the ABC transporter superfamily. Energy-coupling factor EcfA family. In terms of assembly, forms a stable energy-coupling factor (ECF) transporter complex composed of 2 membrane-embedded substrate-binding proteins (S component), 2 ATP-binding proteins (A component) and 2 transmembrane proteins (T component).

It localises to the cell membrane. ATP-binding (A) component of a common energy-coupling factor (ECF) ABC-transporter complex. Unlike classic ABC transporters this ECF transporter provides the energy necessary to transport a number of different substrates. The chain is Energy-coupling factor transporter ATP-binding protein EcfA2 from Caldanaerobacter subterraneus subsp. tengcongensis (strain DSM 15242 / JCM 11007 / NBRC 100824 / MB4) (Thermoanaerobacter tengcongensis).